A 187-amino-acid chain; its full sequence is UPF0398 protein SH1465 (187 aa).

It belongs to the UPF0398 family.

The chain is UPF0398 protein SH1465 from Staphylococcus haemolyticus (strain JCSC1435).